The sequence spans 210 residues: MSLISNNEERSLRVRYCIAIALSALLISGCTTLRLPNQSTSVYHQQTWAQRYYDLSRISQWNIDGAFSIQQPGKTIIAAYDWQQKGMNYRIRIHSSLDIYSVNISGRPGMVTLWRSPRQHYTASTPEQLMQQQLGWQLPLSNLYYWIRGIPAPGAYQADFDTYTHLIALQQSGWHIRFSQYTTVGSVDLPRTLQLSNGSLAVKIVVKHWQ.

The N-terminal stretch at 1–29 (MSLISNNEERSLRVRYCIAIALSALLISG) is a signal peptide. The N-palmitoyl cysteine moiety is linked to residue cysteine 30. Cysteine 30 is lipidated: S-diacylglycerol cysteine.

This sequence belongs to the LolB family. Monomer.

It is found in the cell outer membrane. Its function is as follows. Plays a critical role in the incorporation of lipoproteins in the outer membrane after they are released by the LolA protein. The polypeptide is Outer-membrane lipoprotein LolB (Coxiella burnetii (strain RSA 493 / Nine Mile phase I)).